The sequence spans 320 residues: UPF0053 protein in cps region (320 aa).

A helical transmembrane segment spans residues 4 to 24 (CLSFLLMIGFSLIAEGFSFII). CBS domains lie at 121–183 (MTSR…PLDL) and 186–244 (LVRQ…PNEV).

The protein belongs to the UPF0053 family.

The protein resides in the cell membrane. The polypeptide is UPF0053 protein in cps region (Klebsiella pneumoniae).